We begin with the raw amino-acid sequence, 562 residues long: Potassium-transporting ATPase potassium-binding subunit (562 aa).

The next 12 helical transmembrane spans lie at 6-26 (FLLIASFMLVLLLLARPLGSF), 62-82 (YALAILWFNLLGLALLFALLM), 132-152 (GLAVQNFLSAATGIAVAFALI), 170-190 (VFRITLYVLLPISLLIALFFV), 253-273 (FVQMLAIFLIPCALCFSFGQV), 283-303 (LIWAMSLIFVVAVVVVMYAEL), 327-347 (FGILATSMFSVVTTAASCGAV), 356-376 (ALGGMVPMWLMQIGEVVFGGV), 379-399 (GLYGMLLFVLLTVFIAGLMIG), 416-436 (MTALAILVTPTLVLLGSALAI), 483-503 (LLLAFAMFVGRFGVILPVLAI), and 526-546 (LFIGLLVGTVLLVGALTFVPA).

This sequence belongs to the KdpA family. As to quaternary structure, the system is composed of three essential subunits: KdpA, KdpB and KdpC.

The protein resides in the cell inner membrane. In terms of biological role, part of the high-affinity ATP-driven potassium transport (or Kdp) system, which catalyzes the hydrolysis of ATP coupled with the electrogenic transport of potassium into the cytoplasm. This subunit binds the periplasmic potassium ions and delivers the ions to the membrane domain of KdpB through an intramembrane tunnel. This chain is Potassium-transporting ATPase potassium-binding subunit, found in Serratia proteamaculans (strain 568).